The chain runs to 559 residues: Protein QNR-71 (559 aa).

The N-terminal stretch at 1–22 (MSQAHRHLALLLPAEAVLCAAA) is a signal peptide. Residues 23–487 (MRFQDVLSNG…NGGSSSGTTK (465 aa)) lie on the Extracellular side of the membrane. N-linked (GlcNAc...) asparagine glycans are attached at residues N92, N133, N145, N149, N192, N199, N248, N274, N307, and N311. One can recognise a PKD domain in the interval 239–326 (VSMSQKHDRN…IIPVPCKPVT (88 aa)). A disordered region spans residues 329–356 (PSLPTPAVTTDASSNSDPSAPNEMAEDN). Polar residues predominate over residues 335–347 (AVTTDASSNSDPS). N-linked (GlcNAc...) asparagine glycosylation occurs at N459. Residues 488 to 508 (GVFIFLGLLAVFGAIGAFVLY) traverse the membrane as a helical segment. Residues 509–559 (KRYKQYKPIERSAGQAENQEGLSAYVSNFKAFFFPKSTERNPLLKSKPGIV) lie on the Cytoplasmic side of the membrane.

This sequence belongs to the PMEL/NMB family. Melanocyte-specific, restricted to the pigmented layer of the retina and the epidermis.

The protein resides in the membrane. In terms of biological role, could be involved in melanogenesis. The polypeptide is Protein QNR-71 (QNR-71) (Coturnix japonica (Japanese quail)).